Here is a 510-residue protein sequence, read N- to C-terminus: ATP synthase subunit alpha 1 (510 aa).

167-174 (GDRATGKT) lines the ATP pocket.

The protein belongs to the ATPase alpha/beta chains family. In terms of assembly, F-type ATPases have 2 components, CF(1) - the catalytic core - and CF(0) - the membrane proton channel. CF(1) has five subunits: alpha(3), beta(3), gamma(1), delta(1), epsilon(1). CF(0) has three main subunits: a(1), b(2) and c(9-12). The alpha and beta chains form an alternating ring which encloses part of the gamma chain. CF(1) is attached to CF(0) by a central stalk formed by the gamma and epsilon chains, while a peripheral stalk is formed by the delta and b chains.

The protein localises to the cell inner membrane. The catalysed reaction is ATP + H2O + 4 H(+)(in) = ADP + phosphate + 5 H(+)(out). Its function is as follows. Produces ATP from ADP in the presence of a proton gradient across the membrane. The alpha chain is a regulatory subunit. This is ATP synthase subunit alpha 1 from Paraburkholderia xenovorans (strain LB400).